Here is a 96-residue protein sequence, read N- to C-terminus: Co-chaperonin GroES (96 aa).

The protein belongs to the GroES chaperonin family. As to quaternary structure, heptamer of 7 subunits arranged in a ring. Interacts with the chaperonin GroEL.

The protein resides in the cytoplasm. Together with the chaperonin GroEL, plays an essential role in assisting protein folding. The GroEL-GroES system forms a nano-cage that allows encapsulation of the non-native substrate proteins and provides a physical environment optimized to promote and accelerate protein folding. GroES binds to the apical surface of the GroEL ring, thereby capping the opening of the GroEL channel. The polypeptide is Co-chaperonin GroES (Histophilus somni (strain 129Pt) (Haemophilus somnus)).